A 680-amino-acid chain; its full sequence is DNA ligase 1 (680 aa).

NAD(+) contacts are provided by residues 35 to 39 (DAEYD), 84 to 85 (SL), and Asp115. Lys117 (N6-AMP-lysine intermediate) is an active-site residue. NAD(+) contacts are provided by Arg138, Glu175, Lys295, and Lys319. The Zn(2+) site is built by Cys413, Cys416, Cys431, and Cys436. One can recognise a BRCT domain in the interval 599-680 (REGSQLQGLK…FANLLKGLDR (82 aa)).

It belongs to the NAD-dependent DNA ligase family. LigA subfamily. It depends on Mg(2+) as a cofactor. The cofactor is Mn(2+).

The enzyme catalyses NAD(+) + (deoxyribonucleotide)n-3'-hydroxyl + 5'-phospho-(deoxyribonucleotide)m = (deoxyribonucleotide)n+m + AMP + beta-nicotinamide D-nucleotide.. In terms of biological role, DNA ligase that catalyzes the formation of phosphodiester linkages between 5'-phosphoryl and 3'-hydroxyl groups in double-stranded DNA using NAD as a coenzyme and as the energy source for the reaction. It is essential for DNA replication and repair of damaged DNA. This is DNA ligase 1 from Nitratidesulfovibrio vulgaris (strain DP4) (Desulfovibrio vulgaris).